The following is an 839-amino-acid chain: uncharacterized protein (839 aa).

Disordered stretches follow at residues Thr-504–Asn-611, Lys-627–Cys-646, and Asn-682–Ser-839. The segment covering Gly-509–Asn-611 has biased composition (low complexity). A compositionally biased stretch (basic and acidic residues) spans Asn-636–Cys-646. 2 stretches are compositionally biased toward low complexity: residues Asn-689 to Asn-704 and Gln-713 to Lys-753. The stretch at Gln-726–Ser-764 forms a coiled coil. A compositionally biased stretch (basic and acidic residues) spans Asp-765 to Arg-776. A compositionally biased stretch (acidic residues) spans Glu-809–Asp-823.

This is an uncharacterized protein from Dictyostelium discoideum (Social amoeba).